A 204-amino-acid polypeptide reads, in one-letter code: Outer-membrane lipoprotein carrier protein (204 aa).

Residues 1-21 form the signal peptide; that stretch reads MKKYLNLTALLLVGISNVTWA.

It belongs to the LolA family. As to quaternary structure, monomer.

Its subcellular location is the periplasm. Participates in the translocation of lipoproteins from the inner membrane to the outer membrane. Only forms a complex with a lipoprotein if the residue after the N-terminal Cys is not an aspartate (The Asp acts as a targeting signal to indicate that the lipoprotein should stay in the inner membrane). The chain is Outer-membrane lipoprotein carrier protein from Histophilus somni (strain 2336) (Haemophilus somnus).